The chain runs to 280 residues: PsbP domain-containing protein 7, chloroplastic (280 aa).

The N-terminal 36 residues, 1-36 (MSLKPYFSLLYSSPTNVKLSNFLIAQQPSGDLKTTP), are a transit peptide targeting the chloroplast.

Belongs to the PsbP family.

It localises to the plastid. The protein localises to the chloroplast. The protein is PsbP domain-containing protein 7, chloroplastic (PPD7) of Arabidopsis thaliana (Mouse-ear cress).